A 663-amino-acid polypeptide reads, in one-letter code: UvrABC system protein B (663 aa).

One can recognise a Helicase ATP-binding domain in the interval 31 to 418 (DNIEGGEKAQ…TDTVVEQIIR (388 aa)). 44–51 (GATGTGKT) contributes to the ATP binding site. Residues 97–120 (YYDYYQPEAYVPSSDTYIEKDSSV) carry the Beta-hairpin motif. The Helicase C-terminal domain occupies 435 to 601 (QMDDLLGEIN…TIKKEIRDLI (167 aa)). Residues 627-662 (QAEIKALQQQMQEAAELLDFELAAQIRDVILELKAI) enclose the UVR domain.

Belongs to the UvrB family. In terms of assembly, forms a heterotetramer with UvrA during the search for lesions. Interacts with UvrC in an incision complex.

It localises to the cytoplasm. Functionally, the UvrABC repair system catalyzes the recognition and processing of DNA lesions. A damage recognition complex composed of 2 UvrA and 2 UvrB subunits scans DNA for abnormalities. Upon binding of the UvrA(2)B(2) complex to a putative damaged site, the DNA wraps around one UvrB monomer. DNA wrap is dependent on ATP binding by UvrB and probably causes local melting of the DNA helix, facilitating insertion of UvrB beta-hairpin between the DNA strands. Then UvrB probes one DNA strand for the presence of a lesion. If a lesion is found the UvrA subunits dissociate and the UvrB-DNA preincision complex is formed. This complex is subsequently bound by UvrC and the second UvrB is released. If no lesion is found, the DNA wraps around the other UvrB subunit that will check the other stand for damage. This chain is UvrABC system protein B, found in Streptococcus agalactiae serotype III (strain NEM316).